Here is a 558-residue protein sequence, read N- to C-terminus: N-terminal histidine N-methyltransferase (558 aa).

Topologically, residues 1–15 (MAPFRSIYEKDATKK) are cytoplasmic. The helical transmembrane segment at 16–32 (LVVGAALLVLAAFYSYV) threads the bilayer. Over 33–49 (FLLTLAPVYGSTPSHIF) the chain is Lumenal. The chain crosses the membrane as a helical span at residues 50–65 (HGYGVGIAGVAGWFSK). The Cytoplasmic segment spans residues 66–77 (DIVDRVSGRKAI). Residues 78–96 (YAIPVLAFFLPVVQYFVSQ) form a helical membrane-spanning segment. Residues 97 to 104 (QSSALGNP) are Lumenal-facing. A helical membrane pass occupies residues 105-131 (AGPIFTEVLALYPLVLLSVACAGKLVQ). The Cytoplasmic portion of the chain corresponds to 132–145 (AGLNLQRHGDLVAE). Residues 146 to 169 (HIPLLGSYVIYSAGEHLIKAFLSR) form a helical membrane-spanning segment. At 170–172 (FIG) the chain is on the lumenal side. A helical transmembrane segment spans residues 173–194 (STVLLSRAGLQILIAIFYAAAV). Topologically, residues 195-197 (PSK) are cytoplasmic. A helical transmembrane segment spans residues 198-215 (ALLLAIPAFLFSVTSNTH). Over 216 to 558 (LPLGHTTTAL…VLPDRVWEGW (343 aa)) the chain is Lumenal.

Belongs to the methyltransferase superfamily.

The protein resides in the endoplasmic reticulum membrane. It carries out the reaction L-histidyl-[protein] + S-adenosyl-L-methionine = N(tele)-methyl-L-histidyl-[protein] + S-adenosyl-L-homocysteine + H(+). Functionally, protein-histidine N-methyltransferase that specifically mediates 3-methylhistidine (tele-methylhistidine) methylation at 'His-1', which protects the side-chain from oxidative damage. Methylates lytic polysaccharide monooxygenases (LPMOs) destined for secretion, including AN4702. The chain is N-terminal histidine N-methyltransferase from Emericella nidulans (strain FGSC A4 / ATCC 38163 / CBS 112.46 / NRRL 194 / M139) (Aspergillus nidulans).